Reading from the N-terminus, the 465-residue chain is Cysteine--tRNA ligase (465 aa).

Cysteine 29 contributes to the Zn(2+) binding site. The 'HIGH' region motif lies at 31–41 (PTVYNYIHIGN). 3 residues coordinate Zn(2+): cysteine 209, histidine 234, and glutamate 238. The 'KMSKS' region signature appears at 266–270 (KMSKS). Residue lysine 269 coordinates ATP. Serine 270 carries the post-translational modification Phosphoserine.

The protein belongs to the class-I aminoacyl-tRNA synthetase family. Monomer. It depends on Zn(2+) as a cofactor.

It localises to the cytoplasm. It catalyses the reaction tRNA(Cys) + L-cysteine + ATP = L-cysteinyl-tRNA(Cys) + AMP + diphosphate. In Bacillus cereus (strain ATCC 10987 / NRS 248), this protein is Cysteine--tRNA ligase.